The sequence spans 315 residues: Acetyl-coenzyme A carboxylase carboxyl transferase subunit alpha (315 aa).

Residues 39–293 form the CoA carboxyltransferase C-terminal domain; the sequence is RLQDKSSTLT…RGELASQLAM (255 aa).

The protein belongs to the AccA family. In terms of assembly, acetyl-CoA carboxylase is a heterohexamer composed of biotin carboxyl carrier protein (AccB), biotin carboxylase (AccC) and two subunits each of ACCase subunit alpha (AccA) and ACCase subunit beta (AccD).

The protein localises to the cytoplasm. It carries out the reaction N(6)-carboxybiotinyl-L-lysyl-[protein] + acetyl-CoA = N(6)-biotinyl-L-lysyl-[protein] + malonyl-CoA. It functions in the pathway lipid metabolism; malonyl-CoA biosynthesis; malonyl-CoA from acetyl-CoA: step 1/1. Its function is as follows. Component of the acetyl coenzyme A carboxylase (ACC) complex. First, biotin carboxylase catalyzes the carboxylation of biotin on its carrier protein (BCCP) and then the CO(2) group is transferred by the carboxyltransferase to acetyl-CoA to form malonyl-CoA. The protein is Acetyl-coenzyme A carboxylase carboxyl transferase subunit alpha of Pseudomonas fluorescens (strain SBW25).